The primary structure comprises 462 residues: Succinate semialdehyde dehydrogenase [NAD(P)+] Sad (462 aa).

NADP(+) contacts are provided by residues 136 to 137, 160 to 163, and 212 to 213; these read WN, KHAP, and GS. E234 (proton acceptor) is an active-site residue. L235 is a binding site for NADP(+). C268 acts as the Nucleophile in catalysis. E365 lines the NADP(+) pocket.

The protein belongs to the aldehyde dehydrogenase family. Homodimer.

It carries out the reaction succinate semialdehyde + NAD(+) + H2O = succinate + NADH + 2 H(+). It catalyses the reaction succinate semialdehyde + NADP(+) + H2O = succinate + NADPH + 2 H(+). The protein operates within amino-acid degradation; 4-aminobutanoate degradation. Catalyzes the NAD(+)-dependent oxidation of succinate semialdehyde to succinate. It acts preferentially with NAD as cosubstrate but can also use NADP. Prevents the toxic accumulation of succinate semialdehyde (SSA) and plays an important role when arginine and putrescine are used as the sole nitrogen or carbon sources. The polypeptide is Succinate semialdehyde dehydrogenase [NAD(P)+] Sad (sad) (Escherichia coli (strain K12)).